The following is a 189-amino-acid chain: Phosphomevalonate kinase (189 aa).

ATP contacts are provided by residues 10–16 (KRKCGKD) and Arg-138. Asn-168 lines the substrate pocket.

The protein localises to the cytoplasm. It localises to the cytosol. It carries out the reaction (R)-5-phosphomevalonate + ATP = (R)-5-diphosphomevalonate + ADP. The protein operates within isoprenoid biosynthesis; isopentenyl diphosphate biosynthesis via mevalonate pathway; isopentenyl diphosphate from (R)-mevalonate: step 2/3. This chain is Phosphomevalonate kinase, found in Drosophila melanogaster (Fruit fly).